The following is a 471-amino-acid chain: Putative multidrug resistance protein MdtD (471 aa).

At 1–11 the chain is on the periplasmic side; it reads MTDLPDSTRWR. The chain crosses the membrane as a helical span at residues 12-32; it reads LWIVAFGFFMQSLDTTIVNTA. Residues 33–48 lie on the Cytoplasmic side of the membrane; it reads LPSMAQSLGESPLHMH. A helical transmembrane segment spans residues 49-69; sequence MVIVSYVLTVAVMLPASGWLA. Residues 70-76 are Periplasmic-facing; it reads DKVGVRN. The chain crosses the membrane as a helical span at residues 77–97; that stretch reads IFFTAIVLFTLGSLFCALSGT. Residues 98–101 lie on the Cytoplasmic side of the membrane; the sequence is LNEL. The chain crosses the membrane as a helical span at residues 102–124; sequence LLARALQGVGGAMMVPVGRLTVM. The Periplasmic segment spans residues 125-137; it reads KIVPREQYMAAMT. Residues 138–158 traverse the membrane as a helical segment; that stretch reads FVTLPGQVGPLLGPALGGLLV. Topologically, residues 159–164 are cytoplasmic; it reads EYASWH. A helical transmembrane segment spans residues 165-185; sequence WIFLINIPVGIIGAIATLMLM. The Periplasmic portion of the chain corresponds to 186–196; the sequence is PNYTMQTRRFD. A helical transmembrane segment spans residues 197–217; sequence LSGFLLLAVGMAVLTLALDGS. Residues 218-224 lie on the Cytoplasmic side of the membrane; the sequence is KGTGLSP. Residues 225 to 245 traverse the membrane as a helical segment; it reads LAIAGLVAVGVVALVLYLLHA. Residues 246–262 lie on the Periplasmic side of the membrane; the sequence is QNNNRALFSLKLFRTRT. Residues 263-283 traverse the membrane as a helical segment; sequence FSLGLAGSFAGRIGSGMLPFM. At 284–285 the chain is on the cytoplasmic side; that stretch reads TP. The helical transmembrane segment at 286–306 threads the bilayer; sequence VFLQIGLGFSPFHAGLMMIPM. The Periplasmic segment spans residues 307–341; the sequence is VLGSMGMKRIVVQVVNRFGYRRVLVATTLGLSLVT. A helical transmembrane segment spans residues 342–362; the sequence is LLFMTTALLGWYYVLPFVLFL. The Cytoplasmic portion of the chain corresponds to 363 to 395; it reads QGMVNSTRFSSMNTLTLKDLPDNLASSGNSLLS. Residues 396 to 416 form a helical membrane-spanning segment; sequence MIMQLSMSIGVTIAGLLLGLF. Topologically, residues 417-430 are periplasmic; sequence GSQHVSVDSGTTQT. The chain crosses the membrane as a helical span at residues 431–451; it reads VFMYTWLSMASIIALPAFIFA. Residues 452–471 are Cytoplasmic-facing; that stretch reads RVPNDTHQNVAISRRKRSAQ.

The protein belongs to the major facilitator superfamily. TCR/Tet family.

It is found in the cell inner membrane. The polypeptide is Putative multidrug resistance protein MdtD (Escherichia coli O6:K15:H31 (strain 536 / UPEC)).